Reading from the N-terminus, the 342-residue chain is MSINIEQAIIHEISQDSQGQLRCRLRPQPLLNGQAVEVMLDELHQTYTSKAGKGFGYFGIHGDDGEANPAFANALTQYRAGELGFVEFSGQASKLLQEELAKYDFSQGGFLLMSCYTSITSDYLFVALLSAKSSMTVLDDMELSQNNHLDLNNIQLAARIDLSEWQADKDSRKYISFIRGRAGRKVADFFLDFMGCVEGVNTKAQNKTLMNAVEDFVASSDLTKDERQQCRNKVFEYCSERFDEGADIEIKDLADELADQGMDSFYDFARGGSYDLDEEFPADKSTLRQLKKFSGTGGGVTLSFDGGHLGQRVIYDPISDTILIKGVPANLKDQLDRRLKGE.

This sequence belongs to the YejK family.

The protein resides in the cytoplasm. It localises to the nucleoid. This chain is Nucleoid-associated protein Sputcn32_2288, found in Shewanella putrefaciens (strain CN-32 / ATCC BAA-453).